Reading from the N-terminus, the 367-residue chain is Chorismate synthase (367 aa).

The tract at residues 41–60 (FTHDLQRRASGKSRHTSARR) is disordered. Positions 48 and 54 each coordinate NADP(+). FMN contacts are provided by residues 125–127 (RSS), 238–239 (NA), G278, 293–297 (KPTSS), and R319.

This sequence belongs to the chorismate synthase family. As to quaternary structure, homotetramer. FMNH2 is required as a cofactor.

The enzyme catalyses 5-O-(1-carboxyvinyl)-3-phosphoshikimate = chorismate + phosphate. The protein operates within metabolic intermediate biosynthesis; chorismate biosynthesis; chorismate from D-erythrose 4-phosphate and phosphoenolpyruvate: step 7/7. Catalyzes the anti-1,4-elimination of the C-3 phosphate and the C-6 proR hydrogen from 5-enolpyruvylshikimate-3-phosphate (EPSP) to yield chorismate, which is the branch point compound that serves as the starting substrate for the three terminal pathways of aromatic amino acid biosynthesis. This reaction introduces a second double bond into the aromatic ring system. This is Chorismate synthase from Xanthomonas axonopodis pv. citri (strain 306).